Reading from the N-terminus, the 738-residue chain is Ethylene receptor (738 aa).

A run of 3 helical transmembrane segments spans residues 22-42 (ISDF…VYFV), 53-73 (VLVQ…INLW), and 91-111 (VLTA…IPDL). Positions 64 and 68 each coordinate Cu cation. The region spanning 157–305 (DRHTILKTTL…VVADQVAVAL (149 aa)) is the GAF domain. Residues 348-585 (VMNHEMRTPM…TAIFIVKLGI (238 aa)) form the Histidine kinase domain. At H351 the chain carries Phosphohistidine; by autocatalysis. A Response regulatory domain is found at 613 to 730 (KVLIMDDNGF…KMRSVLSELL (118 aa)). Position 661 is a 4-aspartylphosphate (D661).

This sequence belongs to the ethylene receptor family. Homodimer; disulfide-linked. It depends on Cu cation as a cofactor. In terms of processing, activation probably requires a transfer of a phosphate group between a His in the transmitter domain and an Asp of the receiver domain.

The protein resides in the endoplasmic reticulum membrane. The enzyme catalyses ATP + protein L-histidine = ADP + protein N-phospho-L-histidine.. Its function is as follows. May act early in the ethylene signal transduction pathway, possibly as an ethylene receptor, or as a regulator of the pathway. The sequence is that of Ethylene receptor (ETR1) from Nicotiana tabacum (Common tobacco).